The primary structure comprises 504 residues: Sodium-coupled neutral amino acid transporter 3 (504 aa).

N-linked (GlcNAc...) asparagine glycosylation is present at N74. 5 helical membrane passes run 83–103, 106–126, 144–164, 187–207, and 213–233; these read GILG…LFLL, VALL…VVGI, AAAL…LYII, MNGN…LALM, and LGYS…AVIY. C240 and C275 are disulfide-bonded. Residues N247, N248, N252, and N323 are each glycosylated (N-linked (GlcNAc...) asparagine). 5 helical membrane passes run 324–344, 366–386, 408–428, 431–451, and 471–491; these read LSIA…YLTF, ILCV…IVLF, VLIA…APNI, IFGV…PAIF, and ALCF…FIII.

The protein belongs to the amino acid/polyamine transporter 2 family.

The protein localises to the cell membrane. It localises to the basolateral cell membrane. The catalysed reaction is L-glutamine(out) + Na(+)(out) + H(+)(in) = L-glutamine(in) + Na(+)(in) + H(+)(out). It carries out the reaction L-asparagine(out) + Na(+)(out) + H(+)(in) = L-asparagine(in) + Na(+)(in) + H(+)(out). It catalyses the reaction L-histidine(out) + Na(+)(out) + H(+)(in) = L-histidine(in) + Na(+)(in) + H(+)(out). In terms of biological role, symporter that cotransports specific neutral amino acids and sodium ions, coupled to an H(+) antiporter activity. Mainly participates in the glutamate-GABA-glutamine cycle in brain where it transports L-glutamine from astrocytes in the intercellular space for the replenishment of both neurotransmitters glutamate and gamma-aminobutyric acid (GABA) in neurons and also functions as the major influx transporter in ganglion cells mediating the uptake of glutamine. The transport activity is specific for L-glutamine, L-histidine and L-asparagine. The transport is electroneutral coupled to the cotransport of 1 Na(+) and the antiport of 1 H(+). The transport is pH dependent, saturable, Li(+) tolerant and functions in both direction depending on the concentration gradients of its substrates and cotransported ions. Also mediates an amino acid-gated H(+) conductance that is not stoichiometrically coupled to the amino acid transport but which influences the ionic gradients that drive the amino acid transport. In addition, may play a role in nitrogen metabolism, amino acid homeostasis, glucose metabolism and renal ammoniagenesis. The polypeptide is Sodium-coupled neutral amino acid transporter 3 (Homo sapiens (Human)).